Here is a 152-residue protein sequence, read N- to C-terminus: 6,7-dimethyl-8-ribityllumazine synthase (152 aa).

Residues Phe21, 55-57 (AFE), and 79-81 (AVI) each bind 5-amino-6-(D-ribitylamino)uracil. Residue 84 to 85 (AT) participates in (2S)-2-hydroxy-3-oxobutyl phosphate binding. His87 (proton donor) is an active-site residue. Phe112 contacts 5-amino-6-(D-ribitylamino)uracil. Residue Arg126 participates in (2S)-2-hydroxy-3-oxobutyl phosphate binding.

It belongs to the DMRL synthase family. In terms of assembly, forms an icosahedral capsid composed of 60 subunits, arranged as a dodecamer of pentamers.

It carries out the reaction (2S)-2-hydroxy-3-oxobutyl phosphate + 5-amino-6-(D-ribitylamino)uracil = 6,7-dimethyl-8-(1-D-ribityl)lumazine + phosphate + 2 H2O + H(+). It participates in cofactor biosynthesis; riboflavin biosynthesis; riboflavin from 2-hydroxy-3-oxobutyl phosphate and 5-amino-6-(D-ribitylamino)uracil: step 1/2. Its function is as follows. Catalyzes the formation of 6,7-dimethyl-8-ribityllumazine by condensation of 5-amino-6-(D-ribitylamino)uracil with 3,4-dihydroxy-2-butanone 4-phosphate. This is the penultimate step in the biosynthesis of riboflavin. This is 6,7-dimethyl-8-ribityllumazine synthase from Exiguobacterium sibiricum (strain DSM 17290 / CCUG 55495 / CIP 109462 / JCM 13490 / 255-15).